Here is a 122-residue protein sequence, read N- to C-terminus: S-adenosylmethionine decarboxylase proenzyme (122 aa).

The active-site Schiff-base intermediate with substrate; via pyruvic acid is serine 61. Serine 61 carries the post-translational modification Pyruvic acid (Ser); by autocatalysis. Histidine 66 serves as the catalytic Proton acceptor; for processing activity. Cysteine 81 functions as the Proton donor; for catalytic activity in the catalytic mechanism.

The protein belongs to the prokaryotic AdoMetDC family. Type 1 subfamily. In terms of assembly, heterotetramer of two alpha and two beta chains arranged as a dimer of alpha/beta heterodimers. Requires pyruvate as cofactor. Post-translationally, is synthesized initially as an inactive proenzyme. Formation of the active enzyme involves a self-maturation process in which the active site pyruvoyl group is generated from an internal serine residue via an autocatalytic post-translational modification. Two non-identical subunits are generated from the proenzyme in this reaction, and the pyruvate is formed at the N-terminus of the alpha chain, which is derived from the carboxyl end of the proenzyme. The post-translation cleavage follows an unusual pathway, termed non-hydrolytic serinolysis, in which the side chain hydroxyl group of the serine supplies its oxygen atom to form the C-terminus of the beta chain, while the remainder of the serine residue undergoes an oxidative deamination to produce ammonia and the pyruvoyl group blocking the N-terminus of the alpha chain.

It carries out the reaction S-adenosyl-L-methionine + H(+) = S-adenosyl 3-(methylsulfanyl)propylamine + CO2. The protein operates within amine and polyamine biosynthesis; S-adenosylmethioninamine biosynthesis; S-adenosylmethioninamine from S-adenosyl-L-methionine: step 1/1. Catalyzes the decarboxylation of S-adenosylmethionine to S-adenosylmethioninamine (dcAdoMet), the propylamine donor required for the synthesis of the polyamines spermine and spermidine from the diamine putrescine. In Prochlorococcus marinus (strain MIT 9211), this protein is S-adenosylmethionine decarboxylase proenzyme.